A 493-amino-acid polypeptide reads, in one-letter code: Cysteine--tRNA ligase (493 aa).

C29 is a Zn(2+) binding site. The short motif at 31 to 41 is the 'HIGH' region element; the sequence is ATVQSEPHIGH. The Zn(2+) site is built by C214, H239, and E243. The 'KMSKS' region signature appears at 270-274; the sequence is KMSKS. K273 serves as a coordination point for ATP.

This sequence belongs to the class-I aminoacyl-tRNA synthetase family. In terms of assembly, monomer. The cofactor is Zn(2+).

It is found in the cytoplasm. The catalysed reaction is tRNA(Cys) + L-cysteine + ATP = L-cysteinyl-tRNA(Cys) + AMP + diphosphate. The chain is Cysteine--tRNA ligase from Renibacterium salmoninarum (strain ATCC 33209 / DSM 20767 / JCM 11484 / NBRC 15589 / NCIMB 2235).